We begin with the raw amino-acid sequence, 276 residues long: Formamidopyrimidine-DNA glycosylase (276 aa).

Pro2 serves as the catalytic Schiff-base intermediate with DNA. Glu3 (proton donor) is an active-site residue. The active-site Proton donor; for beta-elimination activity is the Lys58. Positions 94, 112, and 157 each coordinate DNA. The FPG-type zinc finger occupies 242-276; that stretch reads FVYDRAGEPCRVCGAPIRQIVQGQRSTYFCPNCQR. Residue Arg266 is the Proton donor; for delta-elimination activity of the active site.

The protein belongs to the FPG family. As to quaternary structure, monomer. It depends on Zn(2+) as a cofactor.

It carries out the reaction Hydrolysis of DNA containing ring-opened 7-methylguanine residues, releasing 2,6-diamino-4-hydroxy-5-(N-methyl)formamidopyrimidine.. It catalyses the reaction 2'-deoxyribonucleotide-(2'-deoxyribose 5'-phosphate)-2'-deoxyribonucleotide-DNA = a 3'-end 2'-deoxyribonucleotide-(2,3-dehydro-2,3-deoxyribose 5'-phosphate)-DNA + a 5'-end 5'-phospho-2'-deoxyribonucleoside-DNA + H(+). Its function is as follows. Involved in base excision repair of DNA damaged by oxidation or by mutagenic agents. Acts as a DNA glycosylase that recognizes and removes damaged bases. Has a preference for oxidized purines, such as 7,8-dihydro-8-oxoguanine (8-oxoG). Has AP (apurinic/apyrimidinic) lyase activity and introduces nicks in the DNA strand. Cleaves the DNA backbone by beta-delta elimination to generate a single-strand break at the site of the removed base with both 3'- and 5'-phosphates. The protein is Formamidopyrimidine-DNA glycosylase of Burkholderia pseudomallei (strain 1710b).